A 647-amino-acid chain; its full sequence is Acetyl-coenzyme A synthetase (647 aa).

CoA-binding positions include 190–193 (RGGR) and threonine 310. Residues 386 to 388 (GEP), 410 to 415 (DTWWQT), aspartate 499, and arginine 514 each bind ATP. Serine 522 contacts CoA. Residue arginine 525 participates in ATP binding. Valine 536, histidine 538, and valine 541 together coordinate Mg(2+). Arginine 583 lines the CoA pocket. Lysine 608 carries the N6-acetyllysine modification.

The protein belongs to the ATP-dependent AMP-binding enzyme family. It depends on Mg(2+) as a cofactor. In terms of processing, acetylated. Deacetylation by the SIR2-homolog deacetylase activates the enzyme.

The enzyme catalyses acetate + ATP + CoA = acetyl-CoA + AMP + diphosphate. Its function is as follows. Catalyzes the conversion of acetate into acetyl-CoA (AcCoA), an essential intermediate at the junction of anabolic and catabolic pathways. AcsA undergoes a two-step reaction. In the first half reaction, AcsA combines acetate with ATP to form acetyl-adenylate (AcAMP) intermediate. In the second half reaction, it can then transfer the acetyl group from AcAMP to the sulfhydryl group of CoA, forming the product AcCoA. This is Acetyl-coenzyme A synthetase from Xylella fastidiosa (strain 9a5c).